A 554-amino-acid chain; its full sequence is (+)-delta-cadinene synthase isozyme XC14 (554 aa).

The segment covering 1-16 (MASQVSQMPSSSPLSS) has biased composition (low complexity). Residues 1 to 23 (MASQVSQMPSSSPLSSNKDEMRP) form a disordered region. Mg(2+) contacts are provided by Asp-307, Asp-311, and Asp-451. The DDXXD motif signature appears at 307–311 (DDTYD).

The protein belongs to the terpene synthase family. Mg(2+) serves as cofactor.

It catalyses the reaction (2E,6E)-farnesyl diphosphate = (1S,8aR)-delta-cadinene + diphosphate. It participates in secondary metabolite biosynthesis; terpenoid biosynthesis. Responsible for the cyclization of trans,trans-farnesyl diphosphate (FPP) to (+)-delta cadinene. The chain is (+)-delta-cadinene synthase isozyme XC14 from Gossypium arboreum (Tree cotton).